The following is a 397-amino-acid chain: MDTLIIVGSMVTLWSEIPMDILRSVFERLSFVDLHRAKIVCSHWYSCSKQSFLRKTRSPLVILFSDDGDCTLYNPEEARVYKSKRDLSRYRFLANSGNWFLVLDPRSNLYIIDLFSEKKINLPPLDSFKGYKYNLKKVGARKFKELVSEYPTSFHHHAKDLRGLLWVDEKKEEYVVVWYFRNKYTMDSLAFCKNGEDHYREMPTHYGLHDISDMVLQRGDHIYLSTSCKYLQKLDLSRQEGIRTKNDDIISRYQLPCRPTNYKLVYDAKCWCSYNIAVTSSGEVLFVLSIFSQSTRRRIFFLYKEDPNPSPSEVIYKNLVEVDSLGDEALLLDLGITVPADSDLGIEPNSIYFTRHDRVANQKRSSPDICVFNIVTKTLKRFPGLSSLKDARWFLPS.

In terms of domain architecture, F-box spans 11–56; it reads VTLWSEIPMDILRSVFERLSFVDLHRAKIVCSHWYSCSKQSFLRKT.

This chain is F-box protein At5g25290, found in Arabidopsis thaliana (Mouse-ear cress).